Here is a 334-residue protein sequence, read N- to C-terminus: GTP 3',8-cyclase (334 aa).

Positions 13 to 239 constitute a Radical SAM core domain; the sequence is RFHRKFYYLR…KVKAVNDGPA (227 aa). Arg-22 serves as a coordination point for GTP. [4Fe-4S] cluster is bound by residues Cys-29 and Cys-33. An S-adenosyl-L-methionine-binding site is contributed by Tyr-35. Cys-36 contributes to the [4Fe-4S] cluster binding site. Arg-73 is a binding site for GTP. Gly-77 is an S-adenosyl-L-methionine binding site. A GTP-binding site is contributed by Thr-104. S-adenosyl-L-methionine is bound at residue Ser-128. Lys-165 contacts GTP. Position 199 (Met-199) interacts with S-adenosyl-L-methionine. The [4Fe-4S] cluster site is built by Cys-262 and Cys-265. Position 267–269 (267–269) interacts with GTP; it reads RLR. Cys-279 lines the [4Fe-4S] cluster pocket.

This sequence belongs to the radical SAM superfamily. MoaA family. As to quaternary structure, monomer and homodimer. [4Fe-4S] cluster serves as cofactor.

It catalyses the reaction GTP + AH2 + S-adenosyl-L-methionine = (8S)-3',8-cyclo-7,8-dihydroguanosine 5'-triphosphate + 5'-deoxyadenosine + L-methionine + A + H(+). Its pathway is cofactor biosynthesis; molybdopterin biosynthesis. Functionally, catalyzes the cyclization of GTP to (8S)-3',8-cyclo-7,8-dihydroguanosine 5'-triphosphate. This is GTP 3',8-cyclase from Vibrio atlanticus (strain LGP32) (Vibrio splendidus (strain Mel32)).